We begin with the raw amino-acid sequence, 127 residues long: Fluoride-specific ion channel FluC (127 aa).

The next 4 helical transmembrane spans lie at 4–24 (LLLAVFIGGGTGSVARWLLSM), 35–55 (LGTLTANLIGAFIIGIGFAWF), 71–91 (TGFCGGLTTFSTFSAEVVFLL), and 103–123 (VFVNLLGSFAMTALAFWLFSA). Na(+)-binding residues include glycine 75 and threonine 78.

It belongs to the fluoride channel Fluc/FEX (TC 1.A.43) family.

The protein resides in the cell inner membrane. It catalyses the reaction fluoride(in) = fluoride(out). Na(+) is not transported, but it plays an essential structural role and its presence is essential for fluoride channel function. Functionally, fluoride-specific ion channel. Important for reducing fluoride concentration in the cell, thus reducing its toxicity. The polypeptide is Fluoride-specific ion channel FluC (Escherichia coli (strain K12 / MC4100 / BW2952)).